Reading from the N-terminus, the 464-residue chain is Arginine biosynthesis bifunctional protein ArgJ, mitochondrial (464 aa).

Residues 1 to 22 constitute a mitochondrion transit peptide; it reads MAASFKALPQQLTLTRSFARCY. 6 residues coordinate substrate: Thr193, Lys222, Thr233, Glu320, Asn459, and Thr464. Residue Thr233 is the Nucleophile of the active site.

This sequence belongs to the ArgJ family. As to quaternary structure, heterodimer of an alpha and a beta chain. In terms of processing, the alpha and beta chains are autoproteolytically processed from a single precursor protein within the mitochondrion.

It localises to the mitochondrion matrix. The catalysed reaction is N(2)-acetyl-L-ornithine + L-glutamate = N-acetyl-L-glutamate + L-ornithine. It carries out the reaction L-glutamate + acetyl-CoA = N-acetyl-L-glutamate + CoA + H(+). It functions in the pathway amino-acid biosynthesis; L-arginine biosynthesis; L-ornithine and N-acetyl-L-glutamate from L-glutamate and N(2)-acetyl-L-ornithine (cyclic): step 1/1. The protein operates within amino-acid biosynthesis; L-arginine biosynthesis; N(2)-acetyl-L-ornithine from L-glutamate: step 1/4. Catalyzes two activities which are involved in the cyclic version of arginine biosynthesis: the synthesis of acetylglutamate from glutamate and acetyl-CoA, and of ornithine by transacetylation between acetylornithine and glutamate. The protein is Arginine biosynthesis bifunctional protein ArgJ, mitochondrial of Verticillium alfalfae (strain VaMs.102 / ATCC MYA-4576 / FGSC 10136) (Verticillium wilt of alfalfa).